Here is a 208-residue protein sequence, read N- to C-terminus: MTLADPALPRPRLILASASPRRFDLLSGAGLSPDAVEPTHIDEHEIPGELPGPLALRLAQEKAMAHPGSDDAFILAADTVVGVGRRILPKTETEAEARRCLDLLSGRNHRVFTGIAARGPDNRFAARVVETRVKFKRLSQPEIDAYIASGEWRGKAGGYAIQGRAGCFVINLIGSFTGVVGLPLYETANLLTGLGYPVTARMGEGGSA.

Aspartate 78 (proton acceptor) is an active-site residue.

Belongs to the Maf family. YhdE subfamily. A divalent metal cation serves as cofactor.

Its subcellular location is the cytoplasm. The enzyme catalyses dTTP + H2O = dTMP + diphosphate + H(+). The catalysed reaction is UTP + H2O = UMP + diphosphate + H(+). In terms of biological role, nucleoside triphosphate pyrophosphatase that hydrolyzes dTTP and UTP. May have a dual role in cell division arrest and in preventing the incorporation of modified nucleotides into cellular nucleic acids. This chain is dTTP/UTP pyrophosphatase, found in Maricaulis maris (strain MCS10) (Caulobacter maris).